The sequence spans 446 residues: DNA repair protein RadA (446 aa).

A C4-type zinc finger spans residues C10–C27. An ATP-binding site is contributed by G96 to S103. A RadA KNRFG motif motif is present at residues K253–G257. Residues D349–M446 are lon-protease-like.

It belongs to the RecA family. RadA subfamily.

In terms of biological role, DNA-dependent ATPase involved in processing of recombination intermediates, plays a role in repairing DNA breaks. Stimulates the branch migration of RecA-mediated strand transfer reactions, allowing the 3' invading strand to extend heteroduplex DNA faster. Binds ssDNA in the presence of ADP but not other nucleotides, has ATPase activity that is stimulated by ssDNA and various branched DNA structures, but inhibited by SSB. Does not have RecA's homology-searching function. This Campylobacter jejuni subsp. jejuni serotype O:2 (strain ATCC 700819 / NCTC 11168) protein is DNA repair protein RadA.